The following is a 727-amino-acid chain: C-terminal-binding protein 1 (727 aa).

The THAP-type zinc-finger motif lies at 5–60 (CGFPNCKFRSRYRGLEDNRHFYRIPKRPLILRQRWLTAIGRTEETVVSQLRICSAH). The tract at residues 64 to 158 (GEKKEGDIPV…HPPVLPDPQQ (95 aa)) is disordered. Positions 77 to 94 (TVDKQIKIELPPKESKNS) are enriched in basic and acidic residues. Residues Y251, 331 to 336 (LGCGRV), D355, 388 to 394 (CNLGDET), 415 to 417 (TSH), D441, and 467 to 470 (HSAW) contribute to the NAD(+) site. A compositionally biased stretch (low complexity) spans 587-613 (ANAQRGSPANRSSRSSPSPHTNKSSVS). 2 disordered regions span residues 587–629 (ANAQ…SPAA) and 652–681 (APNG…GDEN).

This sequence belongs to the D-isomer specific 2-hydroxyacid dehydrogenase family. Homodimer.

Binds DNA and represses gene expression. Plays a role in regulation of life span, possibly by regulating transcription of genes important for lipid metabolism. This is C-terminal-binding protein 1 from Caenorhabditis elegans.